A 504-amino-acid chain; its full sequence is Tyrosine-protein phosphatase non-receptor type substrate 1 (504 aa).

Residues 1–30 (MEPAGPAPGRLGPLLCLLLAASCAWSGVAG) form the signal peptide. Over 31-373 (EEELQVIQPD…NTGSNERNIY (343 aa)) the chain is Extracellular. Residues 32–137 (EELQVIQPDK…SPDDVEFKSG (106 aa)) form the Ig-like V-type domain. 2 cysteine pairs are disulfide-bonded: cysteine 55/cysteine 121 and cysteine 170/cysteine 228. Ig-like C1-type domains are found at residues 148-247 (PSAP…ANLS) and 254-348 (PTLE…HDLK). 4 N-linked (GlcNAc...) asparagine glycosylation sites follow: asparagine 245, asparagine 270, asparagine 292, and asparagine 319. The cysteines at positions 273 and 331 are disulfide-linked. Residues 336-355 (DGQPAVSKSHDLKVSAHPKE) show a composition bias toward basic and acidic residues. Residues 336 to 364 (DGQPAVSKSHDLKVSAHPKEQGSNTAAEN) form a disordered region. The helical transmembrane segment at 374 to 394 (IVVGVVCTLLVALLMAALYLV) threads the bilayer. Over 395–504 (RIRQKKAQGS…EYASVQVPRK (110 aa)) the chain is Cytoplasmic. Residues 402 to 504 (QGSTSSTRLH…EYASVQVPRK (103 aa)) are disordered. Positions 409–421 (RLHEPEKNAREIT) are enriched in basic and acidic residues. At tyrosine 429 the chain carries Phosphotyrosine; by Tyr-kinases. Positions 429–432 (YADL) match the SH2-binding motif. An SH3-binding motif is present at residues 439 to 444 (KPAPQA). Residues 446–467 (EPNNHTEYASIQTSPQPASEDT) show a composition bias toward polar residues. 2 positions are modified to phosphotyrosine; by Tyr-kinases: tyrosine 453 and tyrosine 470. 3 short sequence motifs (SH2-binding) span residues 453–456 (YASI), 470–473 (YADL), and 496–499 (YASV). Tyrosine 496 bears the Phosphotyrosine mark.

In terms of assembly, binds PTPN11 when tyrosine-phosphorylated, except in macrophages, where it primarily binds PTPN6. Binds GRB2 in vitro. Binds FGR. Binds JAK2 irrespective of its phosphorylation status and forms a stable complex. Binds SCAP1 and/or SCAP2. The resulting complex recruits FYB1. Binds PTK2B. Interacts with TRIM2. In terms of processing, N-glycosylated. Post-translationally, phosphorylated on tyrosine residues in response to stimulation with EGF, growth hormone, insulin and PDGF. Dephosphorylated by PTPN11. Ubiquitous. Highly expressed in brain. Detected on myeloid cells, but not T-cells. Detected at lower levels in heart, placenta, lung, testis, ovary, colon, liver, small intestine, prostate, spleen, kidney, skeletal muscle and pancreas.

It localises to the membrane. In terms of biological role, immunoglobulin-like cell surface receptor for CD47. Acts as docking protein and induces translocation of PTPN6, PTPN11 and other binding partners from the cytosol to the plasma membrane. Supports adhesion of cerebellar neurons, neurite outgrowth and glial cell attachment. May play a key role in intracellular signaling during synaptogenesis and in synaptic function. Involved in the negative regulation of receptor tyrosine kinase-coupled cellular responses induced by cell adhesion, growth factors or insulin. Mediates negative regulation of phagocytosis, mast cell activation and dendritic cell activation. CD47 binding prevents maturation of immature dendritic cells and inhibits cytokine production by mature dendritic cells. Plays a role in antiviral immunity and limits new world arenavirus infection by decreasing virus internalization. Receptor for THBS1. Interaction with THBS1 stimulates phosphorylation of SIRPA. In response to THBS1, involved in ROS signaling in non-phagocytic cells, stimulating NADPH oxidase-derived ROS production. The chain is Tyrosine-protein phosphatase non-receptor type substrate 1 (SIRPA) from Homo sapiens (Human).